A 1169-amino-acid chain; its full sequence is Pesticidal crystal protein Cry1Gb (1169 aa).

This sequence belongs to the delta endotoxin family.

Promotes colloidosmotic lysis by binding to the midgut epithelial cells of lepidopteran larvae. Toxic to Pieris rapae. In Bacillus thuringiensis subsp. wuhanensis, this protein is Pesticidal crystal protein Cry1Gb (cry1Gb).